The following is a 174-amino-acid chain: Adenine phosphoribosyltransferase (174 aa).

This sequence belongs to the purine/pyrimidine phosphoribosyltransferase family. As to quaternary structure, homodimer.

The protein localises to the cytoplasm. The catalysed reaction is AMP + diphosphate = 5-phospho-alpha-D-ribose 1-diphosphate + adenine. It functions in the pathway purine metabolism; AMP biosynthesis via salvage pathway; AMP from adenine: step 1/1. In terms of biological role, catalyzes a salvage reaction resulting in the formation of AMP, that is energically less costly than de novo synthesis. This Mycolicibacterium vanbaalenii (strain DSM 7251 / JCM 13017 / BCRC 16820 / KCTC 9966 / NRRL B-24157 / PYR-1) (Mycobacterium vanbaalenii) protein is Adenine phosphoribosyltransferase.